The primary structure comprises 191 residues: Peptidyl-tRNA hydrolase (191 aa).

A tRNA-binding site is contributed by Tyr-14. His-19 serves as the catalytic Proton acceptor. Positions 64, 66, and 112 each coordinate tRNA.

Belongs to the PTH family. As to quaternary structure, monomer.

The protein resides in the cytoplasm. It carries out the reaction an N-acyl-L-alpha-aminoacyl-tRNA + H2O = an N-acyl-L-amino acid + a tRNA + H(+). Its function is as follows. Hydrolyzes ribosome-free peptidyl-tRNAs (with 1 or more amino acids incorporated), which drop off the ribosome during protein synthesis, or as a result of ribosome stalling. Functionally, catalyzes the release of premature peptidyl moieties from peptidyl-tRNA molecules trapped in stalled 50S ribosomal subunits, and thus maintains levels of free tRNAs and 50S ribosomes. The protein is Peptidyl-tRNA hydrolase of Lachnoclostridium phytofermentans (strain ATCC 700394 / DSM 18823 / ISDg) (Clostridium phytofermentans).